We begin with the raw amino-acid sequence, 374 residues long: Speckle-type POZ protein B (374 aa).

The MATH domain occupies Lys31–Val161. The tract at residues Val71–Gly191 is required for nuclear localization. A BTB domain is found at Gln173–Leu297. A homodimerization region spans residues Leu297–Ser355.

It belongs to the Tdpoz family. As to quaternary structure, homodimer. Part of cullin-RING-based BCR (BTB-CUL3-RBX1) E3 ubiquitin-protein ligase complexes that contain CUL3 and SPOP, plus a target protein.

The protein resides in the nucleus. It localises to the nucleus speckle. It participates in protein modification; protein ubiquitination. Its function is as follows. Component of a cullin-RING-based BCR (BTB-CUL3-RBX1) E3 ubiquitin-protein ligase complex that mediates the ubiquitination of target proteins, leading most often to their proteasomal degradation. This chain is Speckle-type POZ protein B (spop-b), found in Xenopus laevis (African clawed frog).